A 469-amino-acid polypeptide reads, in one-letter code: Probable glucuronoxylan glucuronosyltransferase F8H (469 aa).

Residues Met-1 to Asn-36 lie on the Cytoplasmic side of the membrane. The chain crosses the membrane as a helical; Signal-anchor for type II membrane protein span at residues Ile-37–Leu-57. At Tyr-58–Met-469 the chain is on the lumenal side. N-linked (GlcNAc...) asparagine glycans are attached at residues Asn-171, Asn-203, Asn-301, and Asn-411.

The protein belongs to the glycosyltransferase 47 family. As to expression, expressed in xylem cells in stems and in roots.

Its subcellular location is the golgi apparatus membrane. Its function is as follows. Involved in the synthesis of the hemicellulose glucuronoxylan, a major component of secondary cell walls. Probably involved in the synthesis of the glycosyl sequence at the glucuronoxylan reducing end. The sequence is that of Probable glucuronoxylan glucuronosyltransferase F8H (F8H) from Arabidopsis thaliana (Mouse-ear cress).